Reading from the N-terminus, the 651-residue chain is Mitochondrial sodium/calcium exchanger protein (651 aa).

The chain crosses the membrane as a helical span at residues 51 to 71 (VILIILGILYLIILFVIMSSI). The Cytoplasmic portion of the chain corresponds to 72 to 91 (ADDFFCPAISGIVSHLRMSE). A helical membrane pass occupies residues 92-112 (SIAGVTFLAFGNGAPDVFSSI). The Extracellular portion of the chain corresponds to 113–126 (SSVLTTPKPKADLA). Residues 127 to 147 (LGDLFGTSIFVTTVVLAIIIF) form a helical membrane-spanning segment. The Cytoplasmic segment spans residues 148-161 (TKSFKVAIIPTLRD). The helical transmembrane segment at 162-182 (LIFYMTTLAFIVFCFLKFDKI) threads the bilayer. Position 183 (Glu183) is a topological domain, extracellular. A helical transmembrane segment spans residues 184 to 204 (VWMPATFLGIYGVYVVTVIIL). The Cytoplasmic portion of the chain corresponds to 205-398 (GIYRTHRKKR…PSRDEFSEMN (194 aa)). Residues 399-419 (IFIKIVTVIKVVPVFFFKLTV) form a helical membrane-spanning segment. Residues 420–428 (PSNEMSWCK) lie on the Extracellular side of the membrane. Residues 429-449 (PLFILHCFASIQFALFSIQII) form a helical membrane-spanning segment. At 450–458 (TLKPFDGSP) the chain is on the cytoplasmic side. The chain crosses the membrane as a helical span at residues 459–479 (GLWLYGLGFSAILAMVAMYFL). The Extracellular segment spans residues 480–486 (PLSKEQK). A helical transmembrane segment spans residues 487–507 (YYKEIYSYLGFLMSIAWIYAT). The Cytoplasmic portion of the chain corresponds to 508–510 (SNE). Residues 511 to 531 (IVSVVTMIGVVTGLSMELLGL) form a helical membrane-spanning segment. The Extracellular portion of the chain corresponds to 532–559 (TIMAWSNCIGDIVADIAVVKQGYPKMAM). The helical transmembrane segment at 560-580 (AAAIGGPLFNLLIGFGLPFTI) threads the bilayer. Residues 581-595 (AAAQGKEMELLINPV) are Cytoplasmic-facing. A helical membrane pass occupies residues 596-616 (YRLLMLFLGISLVTTFVALFI). Topologically, residues 617–626 (QRFTVRRPHA) are extracellular. The chain crosses the membrane as a helical span at residues 627-647 (VLLIFIFVVFLIFICLAEFHV). Over 648 to 651 (LEWN) the chain is Cytoplasmic.

It belongs to the Ca(2+):cation antiporter (CaCA) (TC 2.A.19) family. SLC24A subfamily. As to expression, expressed in the seam cells of the organism. Expression is visible in the seam cells across all larval stages, and expression persists into the adult stage of the organism.

Its subcellular location is the mitochondrion inner membrane. Its activity is regulated as follows. Inhibited by the sodium/calcium exchanger inhibitor CGP-37157. Mitochondrial sodium/calcium antiporter that mediates sodium-dependent calcium efflux from mitochondrion, thereby acting as a key regulator of mitochondrion calcium homeostasis. Required for patterning of neural circuits: functions in the same pathway as RAC-dependent effectors of the unc-6/netrin signaling pathway to set left/ right patterning of the VD/DD GABAergic circuit. In Caenorhabditis elegans, this protein is Mitochondrial sodium/calcium exchanger protein.